Reading from the N-terminus, the 132-residue chain is Translation initiation factor 5A (132 aa).

Hypusine is present on lysine 36.

The protein belongs to the eIF-5A family.

The protein localises to the cytoplasm. Functions by promoting the formation of the first peptide bond. In Pyrobaculum arsenaticum (strain DSM 13514 / JCM 11321 / PZ6), this protein is Translation initiation factor 5A (eIF5A).